The sequence spans 63 residues: Conotoxin Cal6.28 (63 aa).

The signal sequence occupies residues 1–22 (MKLTCVLIVAVLILTACQVIAA). 3 disulfide bridges follow: Cys34-Cys45, Cys37-Cys51, and Cys44-Cys58.

It belongs to the conotoxin O1 superfamily. Expressed by the venom duct.

The protein localises to the secreted. Probable neurotoxin. The protein is Conotoxin Cal6.28 of Californiconus californicus (California cone).